Reading from the N-terminus, the 304-residue chain is uncharacterized protein (304 aa).

72–79 contributes to the ATP binding site; it reads GPTGSGKT.

It belongs to the CbbQ/NirQ/NorQ/GpvN family.

This is an uncharacterized protein from Bacillus subtilis (strain 168).